Consider the following 221-residue polypeptide: 3-isopropylmalate dehydratase small subunit (221 aa).

The protein belongs to the LeuD family. LeuD type 1 subfamily. Heterodimer of LeuC and LeuD.

It carries out the reaction (2R,3S)-3-isopropylmalate = (2S)-2-isopropylmalate. It participates in amino-acid biosynthesis; L-leucine biosynthesis; L-leucine from 3-methyl-2-oxobutanoate: step 2/4. In terms of biological role, catalyzes the isomerization between 2-isopropylmalate and 3-isopropylmalate, via the formation of 2-isopropylmaleate. This is 3-isopropylmalate dehydratase small subunit from Nitrosomonas europaea (strain ATCC 19718 / CIP 103999 / KCTC 2705 / NBRC 14298).